The primary structure comprises 183 residues: NAD(P)H-quinone oxidoreductase subunit I, chloroplastic (183 aa).

2 4Fe-4S ferredoxin-type domains span residues Gly-55 to Glu-84 and Thr-95 to Glu-124. [4Fe-4S] cluster-binding residues include Cys-64, Cys-67, Cys-70, Cys-74, Cys-104, Cys-107, Cys-110, and Cys-114.

This sequence belongs to the complex I 23 kDa subunit family. NDH is composed of at least 16 different subunits, 5 of which are encoded in the nucleus. [4Fe-4S] cluster is required as a cofactor.

The protein localises to the plastid. Its subcellular location is the chloroplast thylakoid membrane. It catalyses the reaction a plastoquinone + NADH + (n+1) H(+)(in) = a plastoquinol + NAD(+) + n H(+)(out). The enzyme catalyses a plastoquinone + NADPH + (n+1) H(+)(in) = a plastoquinol + NADP(+) + n H(+)(out). In terms of biological role, NDH shuttles electrons from NAD(P)H:plastoquinone, via FMN and iron-sulfur (Fe-S) centers, to quinones in the photosynthetic chain and possibly in a chloroplast respiratory chain. The immediate electron acceptor for the enzyme in this species is believed to be plastoquinone. Couples the redox reaction to proton translocation, and thus conserves the redox energy in a proton gradient. This Huperzia lucidula (Shining clubmoss) protein is NAD(P)H-quinone oxidoreductase subunit I, chloroplastic.